The primary structure comprises 690 residues: MGTVRSRRLWWPLPLLLLLLRGPAGARAQEDDDGDYEELVLALRSEEDGLAEAPQHGATATFHRCAKDPWRLPGTYVVVLKEETQRSQPERTARRLQAQAARRGYLIKLLHVFHDLLPGFLVKMSRDLLELALRLPHVDYIEEDSYVFAQSIPWNLERITPARYRADEYQPPNGGSLVEVYLLDTSIQSGHREIEGRVMVTDFESVPEEDGTRFHRQASKCDSHGTHLAGVVSGRDAGVAKGASLRSLRVLNCQGKGTVSSTLIGLEFIRKNQLVQPVGPLVVLLPLAGGYSRVLNAACQRLAKAGVVLVAAAGNFRDDACLYSPASAPEVITVGATNAQDQPVTLGTLGTNFGRCVDLFAPGEDIIGASSDCSTCFVSRSGTSQAAAHVAGIAAMMLSAEPELTLAELRQRLIHFSAKDVINEAWFPEDQRVLTPNLVAALPPSTHGAGWQLFCRTVWSAHSGPTRMATAMARCAPDEELLSCSSFSRSGKRRGERIKAQGGRRVCLAHNAFGGEGVYAIARCCLLPQANCSVHTAPPAGAGMGTRVHCHHQGHVLTGCSSHWEVEDLGTHKPSVLRPRVQPDQCMGHSGASTHASCCHAPGLECKVKEHGLPAPQEQVTVACEEGWTLTGCSALPGTSHVLGAYAVDDTCVVRSRDVSTTGNTSEQAVAAVAICCRSRHLAQASQELQ.

The first 28 residues, 1 to 28 (MGTVRSRRLWWPLPLLLLLLRGPAGARA), serve as a signal peptide directing secretion. A propeptide spanning residues 29-150 (QEDDDGDYEE…IEEDSYVFAQ (122 aa)) is cleaved from the precursor. Position 36 is a sulfotyrosine (tyrosine 36). At serine 45 the chain carries Phosphoserine. The 73-residue stretch at 75–147 (TYVVVLKEET…VDYIEEDSYV (73 aa)) folds into the Inhibitor I9 domain. Residues 153-459 (PWNLERITPA…GWQLFCRTVW (307 aa)) enclose the Peptidase S8 domain. Active-site charge relay system residues include aspartate 184 and histidine 224. Disulfide bonds link cysteine 221-cysteine 253 and cysteine 321-cysteine 356. Serine 384 functions as the Charge relay system in the catalytic mechanism. The C-terminal domain stretch occupies residues 448-690 (GAGWQLFCRT…HLAQASQELQ (243 aa)). Disulfide bonds link cysteine 455-cysteine 525, cysteine 475-cysteine 524, and cysteine 484-cysteine 507. An N-linked (GlcNAc...) asparagine glycan is attached at asparagine 531. Intrachain disulfides connect cysteine 532-cysteine 599, cysteine 550-cysteine 598, cysteine 560-cysteine 586, cysteine 606-cysteine 677, cysteine 624-cysteine 676, and cysteine 633-cysteine 652. At serine 686 the chain carries Phosphoserine.

It belongs to the peptidase S8 family. In terms of assembly, monomer. Can self-associate to form dimers and higher multimers which may have increased LDLR degrading activity. The precursor protein but not the mature protein may form multimers. Interacts with APOB, VLDLR, LRP8/APOER2 and BACE1. The full-length immature form (pro-PCSK9) interacts with SCNN1A, SCNN1B and SCNN1G. The pro-PCSK9 form (via C-terminal domain) interacts with LDLR. Interacts (via the C-terminal domain) with ANXA2 (via repeat Annexin 1); the interaction inhibits the degradation of LDLR. Ca(2+) serves as cofactor. Post-translationally, cleavage by furin and PCSK5 generates a truncated inactive protein that is unable to induce LDLR degradation. Undergoes autocatalytic cleavage in the endoplasmic reticulum to release the propeptide from the N-terminus and the cleavage of the propeptide is strictly required for its maturation and activation. The cleaved propeptide however remains associated with the catalytic domain through non-covalent interactions, preventing potential substrates from accessing its active site. As a result, it is secreted from cells as a propeptide-containing, enzymatically inactive protein. In terms of processing, phosphorylation protects the propeptide against proteolysis.

It localises to the cytoplasm. The protein localises to the secreted. Its subcellular location is the endosome. The protein resides in the lysosome. It is found in the cell surface. It localises to the endoplasmic reticulum. The protein localises to the golgi apparatus. Its activity is regulated as follows. Its proteolytic activity is autoinhibited by the non-covalent binding of the propeptide to the catalytic domain. Inhibited by EGTA. Crucial player in the regulation of plasma cholesterol homeostasis. Binds to low-density lipid receptor family members: low density lipoprotein receptor (LDLR), very low density lipoprotein receptor (VLDLR), apolipoprotein E receptor (LRP1/APOER) and apolipoprotein receptor 2 (LRP8/APOER2), and promotes their degradation in intracellular acidic compartments. Acts via a non-proteolytic mechanism to enhance the degradation of the hepatic LDLR through a clathrin LDLRAP1/ARH-mediated pathway. May prevent the recycling of LDLR from endosomes to the cell surface or direct it to lysosomes for degradation. Can induce ubiquitination of LDLR leading to its subsequent degradation. Inhibits intracellular degradation of APOB via the autophagosome/lysosome pathway in a LDLR-independent manner. Involved in the disposal of non-acetylated intermediates of BACE1 in the early secretory pathway. Inhibits epithelial Na(+) channel (ENaC)-mediated Na(+) absorption by reducing ENaC surface expression primarily by increasing its proteasomal degradation. Regulates neuronal apoptosis via modulation of LRP8/APOER2 levels and related anti-apoptotic signaling pathways. This is Proprotein convertase subtilisin/kexin type 9 (PCSK9) from Ateles geoffroyi (Black-handed spider monkey).